The sequence spans 551 residues: Probable 4-coumarate--CoA ligase 3 (551 aa).

Residues Ser-205, Ser-206, Gly-207, Thr-208, Thr-209, and Lys-213 each coordinate ATP. A (E)-4-coumaroyl-AMP-binding site is contributed by Phe-253. Lys-274 contacts CoA. The interval 276-346 (EPVRFLELIK…RFKGRLVIKQ (71 aa)) is SBD1. Ala-323, Gln-346, Gly-347, and Thr-351 together coordinate (E)-4-coumaroyl-AMP. Positions 346, 347, 351, 430, and 445 each coordinate ATP. The segment at 347–409 (GYGATELSPC…IKGPNVMLGY (63 aa)) is SBD2. Residues Lys-447 and Lys-451 each coordinate (E)-4-coumaroyl-AMP. 2 residues coordinate CoA: Lys-453 and Gly-454. Position 537 (Lys-537) interacts with ATP.

Belongs to the ATP-dependent AMP-binding enzyme family. Mg(2+) is required as a cofactor.

The catalysed reaction is (E)-4-coumarate + ATP + CoA = (E)-4-coumaroyl-CoA + AMP + diphosphate. It catalyses the reaction (E)-4-coumarate + ATP + H(+) = (E)-4-coumaroyl-AMP + diphosphate. The enzyme catalyses (E)-4-coumaroyl-AMP + CoA = (E)-4-coumaroyl-CoA + AMP + H(+). It participates in phytoalexin biosynthesis; 3,4',5-trihydroxystilbene biosynthesis; 3,4',5-trihydroxystilbene from trans-4-coumarate: step 1/2. Carboxylate--CoA ligase that may use 4-coumarate as substrate. Follows a two-step reaction mechanism, wherein the carboxylate substrate first undergoes adenylation by ATP, followed by a thioesterification in the presence of CoA to yield the final CoA thioester. This chain is Probable 4-coumarate--CoA ligase 3 (4cl3), found in Dictyostelium discoideum (Social amoeba).